Here is a 208-residue protein sequence, read N- to C-terminus: Probable splicing factor, arginine/serine-rich 5 (208 aa).

The 73-residue stretch at 2 to 74 folds into the RRM domain; that stretch reads PRLYLGKIPY…MRLVVEMARG (73 aa). Positions 71 to 208 are disordered; it reads MARGKPRGND…RSPSPGSPKD (138 aa). A compositionally biased stretch (basic residues) spans 84 to 123; the sequence is SRSPRRRSRSPRRRSRTPPRRRSRSRDRKRSRRSRSRSSS. Basic and acidic residues predominate over residues 128-153; it reads PVRESRRRSESRSPSPKRDLKREASR.

The protein belongs to the splicing factor SR family. Extensively phosphorylated on serine residues in the RS domain.

The protein resides in the nucleus. Its function is as follows. Plays a functionally redundant role in shifting germ cell sexual differentiation in hermaphrodites. The chain is Probable splicing factor, arginine/serine-rich 5 (rsp-5) from Caenorhabditis elegans.